Consider the following 423-residue polypeptide: Immunity-related GTPase family M protein 3 (423 aa).

The IRG-type G domain occupies 83 to 260; sequence YRVKIAVTGD…PELRNTLQKD (178 aa). GTP-binding positions include 92–99, 117–121, and 200–202; these read DSGNGMSS, TGVVR, and KLD.

This sequence belongs to the TRAFAC class dynamin-like GTPase superfamily. IRG family.

The protein resides in the endoplasmic reticulum. It localises to the cytoplasmic vesicle membrane. It is found in the lipid droplet. The enzyme catalyses GTP + H2O = GDP + phosphate + H(+). Immunity-related GTPase that plays important roles in host resistance to acute infection by protozoan, such as Toxoplasma gondii and Leishmania major. Acts as a dynamin-like protein that binds to intracellular membranes and promotes remodeling and trafficking of those membranes. Acts predominantly to restrict acute protozoan infection: expression is required in both hematopoietic and non-hematopoietic cellular compartments and is dependent on Stat1. Only plays a partial role in the control of latent Toxoplasma infection. Involved in the clearance of acute protozoan infections by regulating autophagy, possibly by promoting the fusion of phagosomes with lysosomes for efficient degradation of vacuoles containing parasites. Probably involved in membrane disruption of parasite-containing vacuoles. In addition to its role in resistance to acute infection by protozoan, also acts as a negative regulator of the integrated stress response (ISR) following coxsackievirus B3 infection. Promotes differentiation of activated CD8(+) T-cells. The chain is Immunity-related GTPase family M protein 3 from Mus musculus (Mouse).